The primary structure comprises 301 residues: D-alanine--D-alanine ligase (301 aa).

Residues 99-294 (KSVLEANGIR…FSELIDMIIQ (196 aa)) form the ATP-grasp domain. 126–181 (INELGYPVVVKPTHGGSSVATFIVKEEKEIENCVSEAFKWDSEVMIEKFIKGDEIT) provides a ligand contact to ATP. Residues D248, E261, and N263 each contribute to the Mg(2+) site.

It belongs to the D-alanine--D-alanine ligase family. It depends on Mg(2+) as a cofactor. Mn(2+) serves as cofactor.

It is found in the cytoplasm. It carries out the reaction 2 D-alanine + ATP = D-alanyl-D-alanine + ADP + phosphate + H(+). The protein operates within cell wall biogenesis; peptidoglycan biosynthesis. In terms of biological role, cell wall formation. In Clostridium beijerinckii (strain ATCC 51743 / NCIMB 8052) (Clostridium acetobutylicum), this protein is D-alanine--D-alanine ligase.